We begin with the raw amino-acid sequence, 208 residues long: Ribosomal RNA small subunit methyltransferase G (208 aa).

S-adenosyl-L-methionine-binding positions include glycine 73, leucine 78, 124–125 (VE), and arginine 139.

Belongs to the methyltransferase superfamily. RNA methyltransferase RsmG family.

Its subcellular location is the cytoplasm. It catalyses the reaction guanosine(527) in 16S rRNA + S-adenosyl-L-methionine = N(7)-methylguanosine(527) in 16S rRNA + S-adenosyl-L-homocysteine. In terms of biological role, specifically methylates the N7 position of guanine in position 527 of 16S rRNA. This is Ribosomal RNA small subunit methyltransferase G from Aeromonas salmonicida (strain A449).